A 276-amino-acid chain; its full sequence is Large ribosomal subunit protein uL2 (276 aa).

The segment at 224-276 (VAMNPVDHPHGGGEGKTGEGRVPVSPWGTPTKGYRTRRNKRTTSMIVQRRQKR) is disordered. Basic and acidic residues predominate over residues 230–242 (DHPHGGGEGKTGE).

The protein belongs to the universal ribosomal protein uL2 family. In terms of assembly, part of the 50S ribosomal subunit. Forms a bridge to the 30S subunit in the 70S ribosome.

In terms of biological role, one of the primary rRNA binding proteins. Required for association of the 30S and 50S subunits to form the 70S ribosome, for tRNA binding and peptide bond formation. It has been suggested to have peptidyltransferase activity; this is somewhat controversial. Makes several contacts with the 16S rRNA in the 70S ribosome. The chain is Large ribosomal subunit protein uL2 from Polynucleobacter asymbioticus (strain DSM 18221 / CIP 109841 / QLW-P1DMWA-1) (Polynucleobacter necessarius subsp. asymbioticus).